The chain runs to 169 residues: Large ribosomal subunit protein uL5 (169 aa).

This sequence belongs to the universal ribosomal protein uL5 family. In terms of assembly, part of the 50S ribosomal subunit; contacts the 5S rRNA and probably tRNA. Forms a bridge to the 30S subunit in the 70S ribosome.

In terms of biological role, this is one of the proteins that bind and probably mediate the attachment of the 5S RNA into the large ribosomal subunit, where it forms part of the central protuberance. In the 70S ribosome it contacts protein S13 of the 30S subunit (bridge B1b), connecting the 2 subunits; this bridge is implicated in subunit movement. May contact the P site tRNA; the 5S rRNA and some of its associated proteins might help stabilize positioning of ribosome-bound tRNAs. This is Large ribosomal subunit protein uL5 from Methanosarcina barkeri (strain Fusaro / DSM 804).